A 405-amino-acid chain; its full sequence is S-adenosylmethionine synthase (405 aa).

Residue His-22 participates in ATP binding. Asp-24 contributes to the Mg(2+) binding site. A K(+)-binding site is contributed by Glu-50. L-methionine is bound by residues Glu-63 and Gln-107. A flexible loop region spans residues 107–117; sequence QSPDIAQGVDR. ATP-binding positions include 184 to 186, 250 to 251, Asp-259, 265 to 266, Ala-282, and Lys-286; these read DGK, RF, and RK. Asp-259 is a binding site for L-methionine. Lys-290 is an L-methionine binding site.

This sequence belongs to the AdoMet synthase family. In terms of assembly, homotetramer; dimer of dimers. Mg(2+) serves as cofactor. It depends on K(+) as a cofactor.

It localises to the cytoplasm. It catalyses the reaction L-methionine + ATP + H2O = S-adenosyl-L-methionine + phosphate + diphosphate. Its pathway is amino-acid biosynthesis; S-adenosyl-L-methionine biosynthesis; S-adenosyl-L-methionine from L-methionine: step 1/1. Catalyzes the formation of S-adenosylmethionine (AdoMet) from methionine and ATP. The overall synthetic reaction is composed of two sequential steps, AdoMet formation and the subsequent tripolyphosphate hydrolysis which occurs prior to release of AdoMet from the enzyme. This chain is S-adenosylmethionine synthase, found in Roseiflexus sp. (strain RS-1).